Reading from the N-terminus, the 79-residue chain is Translational regulator CsrA (79 aa).

This sequence belongs to the CsrA/RsmA family. As to quaternary structure, homodimer; the beta-strands of each monomer intercalate to form a hydrophobic core, while the alpha-helices form wings that extend away from the core.

The protein resides in the cytoplasm. A translational regulator that binds mRNA to regulate translation initiation and/or mRNA stability. Usually binds in the 5'-UTR at or near the Shine-Dalgarno sequence preventing ribosome-binding, thus repressing translation. Its main target seems to be the major flagellin gene, while its function is anatagonized by FliW. The protein is Translational regulator CsrA of Solidesulfovibrio magneticus (strain ATCC 700980 / DSM 13731 / RS-1) (Desulfovibrio magneticus).